We begin with the raw amino-acid sequence, 181 residues long: MVDSDGFRPNVGIIVANDDGRVLWARRAGEDAWQFPQGGVEANETPLEALYRELREEVGLGPADVAVLGATRRWLRYRLPRRMIRRRGSRCIGQKQIWFLLRLLADEQRVRVDRVARPEFDRWRWVDYWYPVEEVIFFKRQVYRQALQELSGYLQADDWAGTGTEGGPAAVIPPAARRRLR.

One can recognise a Nudix hydrolase domain in the interval 6-148; it reads GFRPNVGIIV…KRQVYRQALQ (143 aa). The Nudix box motif lies at 38-59; it reads GGVEANETPLEALYRELREEVG.

This sequence belongs to the Nudix hydrolase family. RppH subfamily. A divalent metal cation serves as cofactor.

In terms of biological role, accelerates the degradation of transcripts by removing pyrophosphate from the 5'-end of triphosphorylated RNA, leading to a more labile monophosphorylated state that can stimulate subsequent ribonuclease cleavage. In Halorhodospira halophila (strain DSM 244 / SL1) (Ectothiorhodospira halophila (strain DSM 244 / SL1)), this protein is RNA pyrophosphohydrolase.